The primary structure comprises 433 residues: Ribosome biogenesis protein WDR12 homolog (433 aa).

Met1 is subject to N-acetylmethionine. The segment at 12 to 96 is ubiquitin-like (UBL) domain; that stretch reads LHVKFVTKLD…ERTLEIEYIR (85 aa). WD repeat units follow at residues 108 to 146, 148 to 191, 203 to 242, 270 to 308, 310 to 350, 356 to 396, and 399 to 433; these read LHDD…SHIL, GHSG…SVDS, GHKA…SEGE, GHTQ…DSLN, FCGK…TSAP, SHSS…PLSV, and THND…IAIS. The tract at residues 238 to 263 is disordered; it reads TSEGESVSVKKRKGNNQAEESQSEGE.

The protein belongs to the WD repeat WDR12/YTM1 family. Interacts with PES. Interacts with BOP1.

It is found in the nucleus. Its subcellular location is the nucleolus. The protein resides in the nucleoplasm. Required for maturation of ribosomal RNAs and formation of the large ribosomal subunit. This is Ribosome biogenesis protein WDR12 homolog from Arabidopsis thaliana (Mouse-ear cress).